The primary structure comprises 963 residues: VPS35 endosomal protein-sorting factor-like (963 aa).

The interval 43-69 is disordered; the sequence is SKTKKVNRKGSTSSTSSSSSSSVVDPL. Residues 53–69 show a composition bias toward low complexity; sequence STSSTSSSSSSSVVDPL. At Ser265 the chain carries Phosphoserine. The helical transmembrane segment at 703–719 threads the bilayer; the sequence is ACVAYCFITIPSLAGIF.

This sequence belongs to the VPS35L family. Component of the heterotrimeric retriever complex formed by VPS26C, VPS29 and VPS35L. Interacts with VPS29. Interacts with COMMD1, CCDC93 and CCDC22; associates with the CCC (COMMD/CCDC22/CCDC93) complex which contains at least COMMD1 (and possibly other COMM domain-containing proteins), CCDC22 and CCDC93. Interacts with WASHC1, WASHC2A and WASHC2C. Interacts with SNX17 and SNX31.

It localises to the membrane. Its subcellular location is the endosome. Functionally, acts as a component of the retriever complex. The retriever complex is a heterotrimeric complex related to retromer cargo-selective complex (CSC) and essential for retromer-independent retrieval and recycling of numerous cargos such as integrin alpha-5/beta-1 (ITGA5:ITGB1). The recruitment of the retriever complex to the endosomal membrane involves CCC and WASH complexes. In the endosomes, drives the retrieval and recycling of NxxY-motif-containing cargo proteins by coupling to SNX17, a cargo essential for the homeostatic maintenance of numerous cell surface proteins associated with processes that include cell migration, cell adhesion, nutrient supply and cell signaling. Involved in copper-dependent ATP7A trafficking between the trans-Golgi network and vesicles in the cell periphery; the function is proposed to depend on its association with the CCC complex and cooperation with the WASH complex on early endosomes. Seems not to be required for CCC complex stability. Its function is as follows. (Microbial infection) The heterotrimeric retriever complex, in collaboration with the CCC complex, mediates the exit of human papillomavirus to the cell surface. The sequence is that of VPS35 endosomal protein-sorting factor-like from Homo sapiens (Human).